The primary structure comprises 89 residues: Small ribosomal subunit protein uS15 (89 aa).

The protein belongs to the universal ribosomal protein uS15 family. Part of the 30S ribosomal subunit. Forms a bridge to the 50S subunit in the 70S ribosome, contacting the 23S rRNA.

One of the primary rRNA binding proteins, it binds directly to 16S rRNA where it helps nucleate assembly of the platform of the 30S subunit by binding and bridging several RNA helices of the 16S rRNA. Functionally, forms an intersubunit bridge (bridge B4) with the 23S rRNA of the 50S subunit in the ribosome. The polypeptide is Small ribosomal subunit protein uS15 (Rhodococcus erythropolis (strain PR4 / NBRC 100887)).